The primary structure comprises 1530 residues: Neurexin-1 (1530 aa).

The N-terminal stretch at 1–30 (MGTALVQHGGCCLLCLSLLLLGCWAELGSG) is a signal peptide. Residues 31-217 (LEFPGAEGQW…PPNSGGGSPC (187 aa)) form the Laminin G-like 1 domain. At 31–1454 (LEFPGAEGQW…EVIRESSSTT (1424 aa)) the chain is on the extracellular side. Residues Asn-125 and Asn-190 are each glycosylated (N-linked (GlcNAc...) asparagine). The tract at residues 196–219 (PVDGSEVKLDEEPPNSGGGSPCEA) is disordered. One can recognise an EGF-like 1 domain in the interval 213–255 (GGSPCEAGDEGDGGVCLNGGVCSVVDDQAVCDCSRTGFRGKDC). Cystine bridges form between Cys-228–Cys-243 and Cys-245–Cys-255. 2 Laminin G-like domains span residues 299–496 (IATF…AFKC) and 503–695 (DPIT…KPSC). Residues Asp-345, Leu-362, and Met-430 each contribute to the Ca(2+) site. 5 disulfides stabilise this stretch: Cys-460–Cys-496, Cys-666–Cys-695, Cys-703–Cys-714, Cys-708–Cys-723, and Cys-725–Cys-735. Residues 699–736 (TAKPCLSNPCKNNGMCRDGWNRYVCDCSGTGYLGRSCE) form the EGF-like 2 domain. 2 Laminin G-like domains span residues 741–914 (VLSY…IDYC) and 928–1103 (DPVT…ERGC). The Ca(2+) site is built by Asp-788 and Leu-805. Asn-813 carries an N-linked (GlcNAc...) asparagine glycan. Residue Arg-864 participates in Ca(2+) binding. 5 cysteine pairs are disulfide-bonded: Cys-906/Cys-914, Cys-1075/Cys-1103, Cys-1110/Cys-1121, Cys-1115/Cys-1130, and Cys-1132/Cys-1142. An EGF-like 3 domain is found at 1106-1143 (PSTTCQEDSCSNQGVCLQQWDGFSCDCSMTSFSGPLCN). Positions 1149-1347 (YIFSKGGGQI…DANIAIVGNV (199 aa)) constitute a Laminin G-like 6 domain. 2 residues coordinate Ca(2+): Asp-1199 and Val-1216. Asn-1246 carries N-linked (GlcNAc...) asparagine glycosylation. Ca(2+)-binding residues include Ile-1298 and Asn-1300. Residue Ser-1408 is glycosylated (O-linked (Xyl...) (heparan sulfate) serine). The tract at residues 1412-1443 (PSDDEDIDPCEPSSGGLANPTRVGGREPYPGS) is disordered. The helical transmembrane segment at 1455–1475 (GMVVGIVAAAALCILILLYAM) threads the bilayer. Over 1476–1530 (YKYRNRDEGSYHVDESRNYISNSAQSNGAVVKEKQPSSAKSANKNKKNKDKEYYV) the chain is Cytoplasmic. An interaction with CASK region spans residues 1497 to 1523 (NSAQSNGAVVKEKQPSSAKSANKNKKN). Residues 1497 to 1530 (NSAQSNGAVVKEKQPSSAKSANKNKKNKDKEYYV) form a disordered region.

Belongs to the neurexin family. Interacts (via laminin G-like domain 2 and/or laminin G-like domain 6) with NLGN1 forming a heterotetramer, where one NLGN1 dimer interacts with one NRXN1 dimer. Also interacts (via laminin G-like domain 2 and/or laminin G-like domain 6) with NLGN2, NLGN3 and NLGN4L; interactions with NLGN1, NLGN2, NLGN3 and NLGN4L are calcium-dependent. Interacts (via cytoplasmic C-terminal region) with CASK (via the PDZ, SH3 and guanylate kinase-like domains). Interacts (via cytoplasmic C-terminus) with CASKIN1 and APBA1. Interacts (via laminin G-like domain 2) with NXPH1 and NXPH3. Alpha-type isoforms (neurexin-1-alpha) interact (via laminin G-like domain 2 and/or laminin G-like domain 6) with DAG1 (via alpha-dystroglycan chain). Interacts with LRRTM1, LRRTM2, LRRTM3 and LRRTM4. Interacts with SYT13 and SYTL1. Interacts with CBLN1, CBLN2 and, less avidly, with CBLN4. Interacts with CLSTN3. Alpha-type isoforms interact with alpha-latrotoxin from spider venom. In terms of processing, O-glycosylated; contains heparan sulfate. Heparan sulfate attachment is required for synapse development by mediating interactions with neuroligins and LRRTM2. As to expression, brain (neuronal synapse).

It is found in the presynaptic cell membrane. Its function is as follows. Cell surface protein involved in cell-cell-interactions, exocytosis of secretory granules and regulation of signal transmission. Function is isoform-specific. Alpha-type isoforms have a long N-terminus with six laminin G-like domains and play an important role in synaptic signal transmission. Alpha-type isoforms play a role in the regulation of calcium channel activity and Ca(2+)-triggered neurotransmitter release at synapses and at neuromuscular junctions. They play an important role in Ca(2+)-triggered exocytosis of secretory granules in pituitary gland. They may affect their functions at synapses and in endocrine cells via their interactions with proteins from the exocytotic machinery. Likewise, alpha-type isoforms play a role in regulating the activity of postsynaptic NMDA receptors, a subtype of glutamate-gated ion channels. Both alpha-type and beta-type isoforms may play a role in the formation or maintenance of synaptic junctions via their interactions (via the extracellular domains) with neuroligin family members, CBLN1 or CBLN2. In vitro, triggers the de novo formation of presynaptic structures. May be involved in specification of excitatory synapses. Alpha-type isoforms were first identified as receptors for alpha-latrotoxin from spider venom. In Rattus norvegicus (Rat), this protein is Neurexin-1 (Nrxn1).